The primary structure comprises 252 residues: Imidazole glycerol phosphate synthase subunit HisF (252 aa).

Catalysis depends on residues Asp11 and Asp130.

The protein belongs to the HisA/HisF family. In terms of assembly, heterodimer of HisH and HisF.

It is found in the cytoplasm. It carries out the reaction 5-[(5-phospho-1-deoxy-D-ribulos-1-ylimino)methylamino]-1-(5-phospho-beta-D-ribosyl)imidazole-4-carboxamide + L-glutamine = D-erythro-1-(imidazol-4-yl)glycerol 3-phosphate + 5-amino-1-(5-phospho-beta-D-ribosyl)imidazole-4-carboxamide + L-glutamate + H(+). It functions in the pathway amino-acid biosynthesis; L-histidine biosynthesis; L-histidine from 5-phospho-alpha-D-ribose 1-diphosphate: step 5/9. In terms of biological role, IGPS catalyzes the conversion of PRFAR and glutamine to IGP, AICAR and glutamate. The HisF subunit catalyzes the cyclization activity that produces IGP and AICAR from PRFAR using the ammonia provided by the HisH subunit. This is Imidazole glycerol phosphate synthase subunit HisF from Bacillus anthracis (strain CDC 684 / NRRL 3495).